The primary structure comprises 298 residues: ATP synthase gamma chain (298 aa).

Belongs to the ATPase gamma chain family. As to quaternary structure, F-type ATPases have 2 components, CF(1) - the catalytic core - and CF(0) - the membrane proton channel. CF(1) has five subunits: alpha(3), beta(3), gamma(1), delta(1), epsilon(1). CF(0) has three main subunits: a, b and c.

The protein resides in the cell inner membrane. In terms of biological role, produces ATP from ADP in the presence of a proton gradient across the membrane. The gamma chain is believed to be important in regulating ATPase activity and the flow of protons through the CF(0) complex. In Acidithiobacillus ferridurans, this protein is ATP synthase gamma chain.